Here is a 149-residue protein sequence, read N- to C-terminus: Large ribosomal subunit protein uL13 (149 aa).

Belongs to the universal ribosomal protein uL13 family. As to quaternary structure, part of the 50S ribosomal subunit.

Functionally, this protein is one of the early assembly proteins of the 50S ribosomal subunit, although it is not seen to bind rRNA by itself. It is important during the early stages of 50S assembly. The protein is Large ribosomal subunit protein uL13 of Chlorobium phaeobacteroides (strain DSM 266 / SMG 266 / 2430).